The following is a 952-amino-acid chain: Calsyntenin-1 (952 aa).

Residues 1–28 (MLRRPAPALARAVRLLLAGLLYGGGVWA) form the signal peptide. The Extracellular segment spans residues 29 to 830 (ARVNKHKPWL…PHPFAVVPST (802 aa)). Cadherin domains lie at 38 to 154 (LEPT…APVF) and 155 to 255 (KEKS…SPGW). A glycan (N-linked (GlcNAc...) asparagine) is linked at Asn356. Residues 831–851 (ATVVIVVCVSFLVFMIILGVF) traverse the membrane as a helical segment. The Cytoplasmic segment spans residues 852–952 (RIRAAHQRTM…LEWDYSTLSY (101 aa)). The tract at residues 886 to 952 (METYEDQHSS…LEWDYSTLSY (67 aa)) is disordered. Residues 896–930 (EEEEEEEEEEESEDGEEEEDITSAESESSEEEEGG) are compositionally biased toward acidic residues. A compositionally biased stretch (polar residues) spans 934–952 (GQNTTRQQQLEWDYSTLSY).

Belongs to the calsyntenin family. As to quaternary structure, directly interacts with APBA2. Forms a tripartite complex with APBA2 and APP. Interacts with KLC1. Interacts with APBB1; this interaction stabilizes AlcICD metabolism. In terms of assembly, interacts with PSEN1. Post-translationally, proteolytically processed under normal cellular conditions. A primary zeta-cleavage generates a large extracellular (soluble) N-terminal domain (sAlc) and a short C-terminal transmembrane fragment (CTF1). A secondary cleavage catalyzed by presenilin gamma-secretase within the transmembrane domain releases the beta-Alc-alpha chain in the extracellular milieu and produces an intracellular fragment (AlcICD). This processing is strongly suppressed in the tripartite complex formed with APBA2 and APP, which seems to prevent the association with PSEN1. In terms of tissue distribution, preferentially expressed in the retina and brain.

Its subcellular location is the postsynaptic cell membrane. The protein resides in the endoplasmic reticulum membrane. It localises to the golgi apparatus membrane. It is found in the cell projection. The protein localises to the neuron projection. Its subcellular location is the nucleus. Functionally, postsynaptic adhesion molecule that binds to presynaptic neurexins to mediate both excitatory and inhibitory synapse formation. Promotes synapse development by acting as a cell adhesion molecule at the postsynaptic membrane, which associates with neurexin-alpha at the presynaptic membrane. Also functions as a cargo in axonal anterograde transport by acting as a molecular adapter that promotes KLC1 association with vesicles. Complex formation with APBA2 and APP, stabilizes APP metabolism and enhances APBA2-mediated suppression of beta-APP40 secretion, due to the retardation of intracellular APP maturation. Its function is as follows. As intracellular fragment AlcICD, suppresses APBB1-dependent transactivation stimulated by APP C-terminal intracellular fragment (AICD), most probably by competing with AICD for APBB1-binding. In terms of biological role, in complex with APBA2 and C99, a C-terminal APP fragment, abolishes C99 interaction with PSEN1 and thus APP C99 cleavage by gamma-secretase, most probably through stabilization of the direct interaction between APBA2 and APP. The chain is Calsyntenin-1 (Clstn1) from Rattus norvegicus (Rat).